We begin with the raw amino-acid sequence, 321 residues long: Sphingolipid delta(4)-desaturase DES1 (321 aa).

Helical transmembrane passes span 41-61 (PNFK…LFVV), 68-88 (WLIV…MLAV), 107-127 (ILGF…FKKY), 157-177 (FGKF…PLII), 187-206 (IINT…FLGW), and 208-230 (PLAY…GHFI).

The protein belongs to the fatty acid desaturase type 1 family. DEGS subfamily. In terms of tissue distribution, testes.

It localises to the endoplasmic reticulum membrane. Its subcellular location is the membrane. The protein resides in the mitochondrion. The enzyme catalyses an N-acylsphinganine + 2 Fe(II)-[cytochrome b5] + O2 + 2 H(+) = an N-acylsphing-4-enine + 2 Fe(III)-[cytochrome b5] + 2 H2O. It carries out the reaction an N-acyleicosasphinganine + 2 Fe(II)-[cytochrome b5] + O2 + 2 H(+) = an N-acyleicosasphing-4-enine + 2 Fe(III)-[cytochrome b5] + 2 H2O. It functions in the pathway sphingolipid metabolism. Has sphingolipid-delta-4-desaturase activity. Converts sphinganine-containing sphingolipids (such as N-acylsphinganines or dihydroceramides) into sphingolipids containing the delta-4-desaturated sphingoid base (E)-sphing-4-enine (such as N-acylsphing-4-enines or ceramides), which are required for many different functions (structural functions as well as signaling). Required to initiate spermatid differentiation among other signals. Required for central spindle assembly and cytokinesis during male meiosis, may act as part of an anchoring mechanism that links membrane-bounded cellular compartments to components of the cytoskeleton. The polypeptide is Sphingolipid delta(4)-desaturase DES1 (Drosophila melanogaster (Fruit fly)).